A 453-amino-acid polypeptide reads, in one-letter code: Ribulose bisphosphate carboxylase large chain (453 aa).

The propeptide occupies 1 to 2; that stretch reads MS. Proline 3 is modified (N-acetylproline). Lysine 14 bears the N6,N6,N6-trimethyllysine mark. 2 residues coordinate substrate: asparagine 123 and threonine 173. Catalysis depends on lysine 175, which acts as the Proton acceptor. Lysine 177 serves as a coordination point for substrate. Residues lysine 201, aspartate 203, and glutamate 204 each contribute to the Mg(2+) site. Lysine 201 carries the post-translational modification N6-carboxylysine. Residue histidine 294 is the Proton acceptor of the active site. Substrate-binding residues include arginine 295, histidine 327, and serine 379.

The protein belongs to the RuBisCO large chain family. Type I subfamily. As to quaternary structure, heterohexadecamer of 8 large chains and 8 small chains; disulfide-linked. The disulfide link is formed within the large subunit homodimers. The cofactor is Mg(2+). Post-translationally, the disulfide bond which can form in the large chain dimeric partners within the hexadecamer appears to be associated with oxidative stress and protein turnover.

It localises to the plastid. It is found in the chloroplast. The enzyme catalyses 2 (2R)-3-phosphoglycerate + 2 H(+) = D-ribulose 1,5-bisphosphate + CO2 + H2O. It catalyses the reaction D-ribulose 1,5-bisphosphate + O2 = 2-phosphoglycolate + (2R)-3-phosphoglycerate + 2 H(+). Its function is as follows. RuBisCO catalyzes two reactions: the carboxylation of D-ribulose 1,5-bisphosphate, the primary event in carbon dioxide fixation, as well as the oxidative fragmentation of the pentose substrate in the photorespiration process. Both reactions occur simultaneously and in competition at the same active site. The polypeptide is Ribulose bisphosphate carboxylase large chain (Galium album (White bedstraw)).